The primary structure comprises 489 residues: Glutamyl-tRNA(Gln) amidotransferase subunit A (489 aa).

Active-site charge relay system residues include Lys-77 and Ser-157. Catalysis depends on Ser-181, which acts as the Acyl-ester intermediate.

This sequence belongs to the amidase family. GatA subfamily. Heterotrimer of A, B and C subunits.

The enzyme catalyses L-glutamyl-tRNA(Gln) + L-glutamine + ATP + H2O = L-glutaminyl-tRNA(Gln) + L-glutamate + ADP + phosphate + H(+). In terms of biological role, allows the formation of correctly charged Gln-tRNA(Gln) through the transamidation of misacylated Glu-tRNA(Gln) in organisms which lack glutaminyl-tRNA synthetase. The reaction takes place in the presence of glutamine and ATP through an activated gamma-phospho-Glu-tRNA(Gln). The chain is Glutamyl-tRNA(Gln) amidotransferase subunit A from Caulobacter vibrioides (strain ATCC 19089 / CIP 103742 / CB 15) (Caulobacter crescentus).